Consider the following 442-residue polypeptide: tRNA(Ile)-lysidine synthase (442 aa).

27–32 (SGGLDS) is a binding site for ATP.

The protein belongs to the tRNA(Ile)-lysidine synthase family.

The protein resides in the cytoplasm. It catalyses the reaction cytidine(34) in tRNA(Ile2) + L-lysine + ATP = lysidine(34) in tRNA(Ile2) + AMP + diphosphate + H(+). Its function is as follows. Ligates lysine onto the cytidine present at position 34 of the AUA codon-specific tRNA(Ile) that contains the anticodon CAU, in an ATP-dependent manner. Cytidine is converted to lysidine, thus changing the amino acid specificity of the tRNA from methionine to isoleucine. This Photorhabdus laumondii subsp. laumondii (strain DSM 15139 / CIP 105565 / TT01) (Photorhabdus luminescens subsp. laumondii) protein is tRNA(Ile)-lysidine synthase.